Here is a 129-residue protein sequence, read N- to C-terminus: uncharacterized protein (129 aa).

Positions asparagine 86–glutamate 96 are enriched in acidic residues. The tract at residues asparagine 86–threonine 116 is disordered. Positions glutamate 103–threonine 116 are enriched in polar residues.

The protein belongs to the asfivirus D129L family.

This is an uncharacterized protein from African swine fever virus (strain Badajoz 1971 Vero-adapted) (Ba71V).